A 186-amino-acid chain; its full sequence is Adenylate kinase isoenzyme 6 homolog (186 aa).

Residues glycine 15, glycine 17, lysine 18, serine 19, and threonine 20 each contribute to the ATP site. Positions 48 to 71 are NMPbind; it reads NLSNIIKDERLYKEFDDELDASIY. Positions 126–136 are LID; sequence KRNYTKEKIKN. Arginine 127 lines the ATP pocket.

The protein belongs to the adenylate kinase family. AK6 subfamily. Monomer and homodimer. Interacts with small ribosomal subunit protein uS11. Not a structural component of 43S pre-ribosomes, but transiently interacts with them by binding to uS11.

The protein resides in the cytoplasm. It localises to the nucleus. It carries out the reaction AMP + ATP = 2 ADP. It catalyses the reaction ATP + H2O = ADP + phosphate + H(+). Its function is as follows. Broad-specificity nucleoside monophosphate (NMP) kinase that catalyzes the reversible transfer of the terminal phosphate group between nucleoside triphosphates and monophosphates. Also has ATPase activity. Involved in the late cytoplasmic maturation steps of the 40S ribosomal particles, specifically 18S rRNA maturation. While NMP activity is not required for ribosome maturation, ATPase activity is. Associates transiently with small ribosomal subunit protein uS11. ATP hydrolysis breaks the interaction with uS11. May temporarily remove uS11 from the ribosome to enable a conformational change of the ribosomal RNA that is needed for the final maturation step of the small ribosomal subunit. Its NMP activity may have a role in nuclear energy homeostasis. The protein is Adenylate kinase isoenzyme 6 homolog of Plasmodium falciparum (isolate 3D7).